A 209-amino-acid polypeptide reads, in one-letter code: Mitochondrial import inner membrane translocase subunit Tim23 (209 aa).

3 helical membrane passes run 73–93 (FELA…FGAM), 125–145 (ALWA…GVII), and 181–197 (GLAG…YNNW).

The protein belongs to the Tim17/Tim22/Tim23 family. Component of the TIM23 complex at least composed of TIMM23, TIMM17 (TIMM17A or TIMM17B) and TIMM50; within this complex, directly interacts with TIMM50. The complex interacts with the TIMM44 component of the PAM complex and with DNAJC15. Upon mitochondrial depolarization, interacts with PINK1; the interaction is required for PINK1 accumulation at the outer mitochondrial membrane, kinase activation by autophosphorylation and PRKN recruitement to mitochondria.

The protein resides in the mitochondrion inner membrane. Essential component of the TIM23 complex, a complex that mediates the translocation of transit peptide-containing proteins across the mitochondrial inner membrane. Has a role in the activation of stress-induced mitophagy by protecting PINK1 from OMA1-mediated degradation and facilitating its accumulation at the outer mitochondrial membrane in response to depolarization. This chain is Mitochondrial import inner membrane translocase subunit Tim23 (Timm23), found in Mus musculus (Mouse).